Here is a 195-residue protein sequence, read N- to C-terminus: Inosine triphosphate pyrophosphatase (195 aa).

13-18 (TGNAKK) contributes to the ITP binding site. Residue glutamate 43 coordinates Mg(2+). Residues lysine 55, 71–72 (DT), lysine 88, 148–151 (FGWD), lysine 171, and 176–177 (HR) contribute to the ITP site.

Belongs to the HAM1 NTPase family. Homodimer. Mg(2+) serves as cofactor. Requires Mn(2+) as cofactor.

The protein localises to the cytoplasm. The enzyme catalyses ITP + H2O = IMP + diphosphate + H(+). It catalyses the reaction dITP + H2O = dIMP + diphosphate + H(+). It carries out the reaction XTP + H2O = XMP + diphosphate + H(+). The catalysed reaction is N(6)-hydroxy-dATP + H2O = N(6)-hydroxy-dAMP + diphosphate + H(+). Pyrophosphatase that hydrolyzes the non-canonical purine nucleotides inosine triphosphate (ITP), deoxyinosine triphosphate (dITP) as well as 2'-deoxy-N-6-hydroxylaminopurine triphosphate (dHAPTP) and xanthosine 5'-triphosphate (XTP) to their respective monophosphate derivatives. The enzyme does not distinguish between the deoxy- and ribose forms. Probably excludes non-canonical purines from RNA and DNA precursor pools, thus preventing their incorporation into RNA and DNA and avoiding chromosomal lesions. In Xenopus laevis (African clawed frog), this protein is Inosine triphosphate pyrophosphatase (itpa).